We begin with the raw amino-acid sequence, 179 residues long: Large ribosomal subunit protein uL5 (179 aa).

It belongs to the universal ribosomal protein uL5 family. Part of the 50S ribosomal subunit; part of the 5S rRNA/L5/L18/L25 subcomplex. Contacts the 5S rRNA and the P site tRNA. Forms a bridge to the 30S subunit in the 70S ribosome.

In terms of biological role, this is one of the proteins that bind and probably mediate the attachment of the 5S RNA into the large ribosomal subunit, where it forms part of the central protuberance. In the 70S ribosome it contacts protein S13 of the 30S subunit (bridge B1b), connecting the 2 subunits; this bridge is implicated in subunit movement. Contacts the P site tRNA; the 5S rRNA and some of its associated proteins might help stabilize positioning of ribosome-bound tRNAs. In Desulfitobacterium hafniense (strain Y51), this protein is Large ribosomal subunit protein uL5.